We begin with the raw amino-acid sequence, 350 residues long: Ferrochelatase (350 aa).

Fe cation contacts are provided by His220 and Glu301.

It belongs to the ferrochelatase family.

It is found in the cytoplasm. It carries out the reaction heme b + 2 H(+) = protoporphyrin IX + Fe(2+). Its pathway is porphyrin-containing compound metabolism; protoheme biosynthesis; protoheme from protoporphyrin-IX: step 1/1. Functionally, catalyzes the ferrous insertion into protoporphyrin IX. This chain is Ferrochelatase, found in Brucella anthropi (strain ATCC 49188 / DSM 6882 / CCUG 24695 / JCM 21032 / LMG 3331 / NBRC 15819 / NCTC 12168 / Alc 37) (Ochrobactrum anthropi).